The sequence spans 157 residues: uncharacterized protein (157 aa).

It belongs to the MG067/MG068/MG395 family.

This is an uncharacterized protein from Mycoplasma pneumoniae (strain ATCC 29342 / M129 / Subtype 1) (Mycoplasmoides pneumoniae).